Reading from the N-terminus, the 220-residue chain is Large ribosomal subunit protein uL3 (220 aa).

The disordered stretch occupies residues 145-169 (GPASHGSKFHRRPGSSGNRTWPGRV).

This sequence belongs to the universal ribosomal protein uL3 family. Part of the 50S ribosomal subunit. Forms a cluster with proteins L14 and L19.

Its function is as follows. One of the primary rRNA binding proteins, it binds directly near the 3'-end of the 23S rRNA, where it nucleates assembly of the 50S subunit. The sequence is that of Large ribosomal subunit protein uL3 from Bdellovibrio bacteriovorus (strain ATCC 15356 / DSM 50701 / NCIMB 9529 / HD100).